The sequence spans 447 residues: UDP-N-acetylmuramate--L-alanine ligase (447 aa).

ATP is bound at residue 107-113 (GTHGKTT).

It belongs to the MurCDEF family.

The protein resides in the cytoplasm. It carries out the reaction UDP-N-acetyl-alpha-D-muramate + L-alanine + ATP = UDP-N-acetyl-alpha-D-muramoyl-L-alanine + ADP + phosphate + H(+). It functions in the pathway cell wall biogenesis; peptidoglycan biosynthesis. Cell wall formation. This Rubrobacter xylanophilus (strain DSM 9941 / JCM 11954 / NBRC 16129 / PRD-1) protein is UDP-N-acetylmuramate--L-alanine ligase.